Consider the following 335-residue polypeptide: tRNA N6-adenosine threonylcarbamoyltransferase (335 aa).

Residues His-111 and His-115 each coordinate Fe cation. Residues Leu-133–Gly-137, Asp-166, Gly-179, and Asn-276 contribute to the substrate site. Asp-301 contributes to the Fe cation binding site.

It belongs to the KAE1 / TsaD family. It depends on Fe(2+) as a cofactor.

The protein resides in the cytoplasm. The enzyme catalyses L-threonylcarbamoyladenylate + adenosine(37) in tRNA = N(6)-L-threonylcarbamoyladenosine(37) in tRNA + AMP + H(+). Its function is as follows. Required for the formation of a threonylcarbamoyl group on adenosine at position 37 (t(6)A37) in tRNAs that read codons beginning with adenine. Is involved in the transfer of the threonylcarbamoyl moiety of threonylcarbamoyl-AMP (TC-AMP) to the N6 group of A37, together with TsaE and TsaB. TsaD likely plays a direct catalytic role in this reaction. This chain is tRNA N6-adenosine threonylcarbamoyltransferase, found in Wolbachia pipientis wMel.